The sequence spans 378 residues: Vacuolar membrane protein CAGL0J10076g (378 aa).

Residues 18 to 70 (RGLPRLVTTSTTPTPTTEPTTEPTTTKDETSQTSATDASTATTSTAATSTAAT) form a disordered region. 2 stretches are compositionally biased toward low complexity: residues 25–41 (TTST…TEPT) and 48–70 (SQTS…TAAT). A helical membrane pass occupies residues 118 to 138 (FIAVGSIAGAILMLIFLWWSI). The segment at 299 to 368 (NDYDTPLIPD…ARDHRKTPSM (70 aa)) is disordered. Positions 321-337 (RSHRKTPSNDKYHRRNR) are enriched in basic residues. Residues 343 to 356 (SPSRSPTRTPIRTR) show a composition bias toward low complexity.

This sequence belongs to the PRM5 family.

It localises to the vacuole membrane. This chain is Vacuolar membrane protein CAGL0J10076g, found in Candida glabrata (strain ATCC 2001 / BCRC 20586 / JCM 3761 / NBRC 0622 / NRRL Y-65 / CBS 138) (Yeast).